Here is a 286-residue protein sequence, read N- to C-terminus: 4-hydroxybenzoate octaprenyltransferase (286 aa).

Transmembrane regions (helical) follow at residues 20-40 (IGTLLLMWPCLMALVLAAGGM), 43-63 (LKVLVIFIIGVVVMRACGCII), 96-116 (LFVVMGLIAFGLVLMLNPLVV), 142-162 (FLGVVWSWSIPMAYAAQTGTV), 167-187 (WWLFAANWCWTVAYDTMYAMV), 210-230 (QVIALFQLAALACFIIAGWAA), and 234-254 (LVYALGIITFVGFSLYQQKLI).

Belongs to the UbiA prenyltransferase family. It depends on Mg(2+) as a cofactor.

Its subcellular location is the cell inner membrane. The catalysed reaction is all-trans-octaprenyl diphosphate + 4-hydroxybenzoate = 4-hydroxy-3-(all-trans-octaprenyl)benzoate + diphosphate. It participates in cofactor biosynthesis; ubiquinone biosynthesis. Its function is as follows. Catalyzes the prenylation of para-hydroxybenzoate (PHB) with an all-trans polyprenyl group. Mediates the second step in the final reaction sequence of ubiquinone-8 (UQ-8) biosynthesis, which is the condensation of the polyisoprenoid side chain with PHB, generating the first membrane-bound Q intermediate 3-octaprenyl-4-hydroxybenzoate. This is 4-hydroxybenzoate octaprenyltransferase from Shewanella woodyi (strain ATCC 51908 / MS32).